A 146-amino-acid polypeptide reads, in one-letter code: MMSMASTTASPFCPSPMPRGRKCTVRVQAGAAGADASDKSLEIMRKFSEQYARRSNTFFCSEKSVTAVVIKGLADHKDQLGAPLCPCRHYDDKAAEVAQGFWNCPCVPMRERKECHCMLFLTPDNDFAGQDQAITLEEIKDATSKI.

Residues 1-26 constitute a chloroplast transit peptide; the sequence is MMSMASTTASPFCPSPMPRGRKCTVR. A [4Fe-4S] cluster-binding site is contributed by C85. Catalysis depends on C87, which acts as the Nucleophile. C87 and C117 are disulfide-bonded. [4Fe-4S] cluster contacts are provided by C104, C106, and C115.

It belongs to the ferredoxin thioredoxin reductase beta subunit family. In terms of assembly, heterodimer of subunit A (variable subunit) and subunit B (catalytic subunit). Heterodimeric FTR forms a complex with ferredoxin and thioredoxin. [4Fe-4S] cluster serves as cofactor.

It is found in the plastid. Its subcellular location is the chloroplast. It carries out the reaction [thioredoxin]-disulfide + 2 reduced [2Fe-2S]-[ferredoxin] + 2 H(+) = [thioredoxin]-dithiol + 2 oxidized [2Fe-2S]-[ferredoxin]. Catalytic subunit of the ferredoxin-thioredoxin reductase (FTR), which catalyzes the two-electron reduction of thioredoxins by the electrons provided by reduced ferredoxin. The chain is Ferredoxin-thioredoxin reductase catalytic chain, chloroplastic from Oryza sativa subsp. japonica (Rice).